A 128-amino-acid chain; its full sequence is Large ribosomal subunit protein bL19 (128 aa).

The protein belongs to the bacterial ribosomal protein bL19 family.

In terms of biological role, this protein is located at the 30S-50S ribosomal subunit interface and may play a role in the structure and function of the aminoacyl-tRNA binding site. This Azoarcus sp. (strain BH72) protein is Large ribosomal subunit protein bL19.